The primary structure comprises 45 residues: U1-ctenitoxin-Pk1a (45 aa).

4 disulfides stabilise this stretch: Cys3–Cys16, Cys10–Cys25, Cys15–Cys34, and Cys27–Cys32.

In terms of tissue distribution, expressed by the venom gland.

It localises to the secreted. In terms of biological role, neurotoxin. Causes rapid general flaccid paralysis and death in mice at dose levels of 5 ug per mouse. This is U1-ctenitoxin-Pk1a from Phoneutria keyserlingi (Brazilian wandering spider).